Here is a 136-residue protein sequence, read N- to C-terminus: Large ribosomal subunit protein uL16 (136 aa).

It belongs to the universal ribosomal protein uL16 family. In terms of assembly, part of the 50S ribosomal subunit.

Functionally, binds 23S rRNA and is also seen to make contacts with the A and possibly P site tRNAs. In Orientia tsutsugamushi (strain Boryong) (Rickettsia tsutsugamushi), this protein is Large ribosomal subunit protein uL16.